Consider the following 514-residue polypeptide: 3-octaprenyl-4-hydroxybenzoate carboxy-lyase (514 aa).

Asn177 contributes to the Mn(2+) binding site. Residues 180 to 182 (IYR), 194 to 196 (RWL), and 199 to 200 (RG) each bind prenylated FMN. Glu243 provides a ligand contact to Mn(2+). Catalysis depends on Asp314, which acts as the Proton donor.

The protein belongs to the UbiD family. Homohexamer. Requires prenylated FMN as cofactor. The cofactor is Mn(2+).

Its subcellular location is the cell membrane. It catalyses the reaction a 4-hydroxy-3-(all-trans-polyprenyl)benzoate + H(+) = a 2-(all-trans-polyprenyl)phenol + CO2. It functions in the pathway cofactor biosynthesis; ubiquinone biosynthesis. Functionally, catalyzes the decarboxylation of 3-octaprenyl-4-hydroxy benzoate to 2-octaprenylphenol, an intermediate step in ubiquinone biosynthesis. This is 3-octaprenyl-4-hydroxybenzoate carboxy-lyase from Bordetella pertussis (strain Tohama I / ATCC BAA-589 / NCTC 13251).